A 992-amino-acid polypeptide reads, in one-letter code: Disks large-associated protein 1 (992 aa).

Disordered regions lie at residues 150–209 (TKSH…SWWS) and 355–376 (KAMG…PKVA). Position 169 is a phosphoserine (Ser-169). Over residues 194-209 (RSNASNASPTSPSWWS) the composition is skewed to low complexity. A phosphoserine mark is found at Ser-362, Ser-365, Ser-368, Ser-372, Ser-389, Ser-418, Ser-421, Ser-425, Ser-428, Ser-437, Ser-509, Ser-516, and Ser-578. Thr-579 carries the post-translational modification Phosphothreonine. Phosphoserine occurs at positions 581 and 605. Thr-606 carries the phosphothreonine modification. Phosphoserine is present on residues Ser-608 and Ser-611. Interaction with DYL2 regions lie at residues 665-676 (LSIGIQVDDAEE) and 687-698 (NKFQSVGVQVEE). Residues 914–980 (WKQMDPLDKK…QNSATESAES (67 aa)) form a disordered region. Basic and acidic residues-rich tracts occupy residues 918-927 (DPLDKKERRA) and 943-958 (IRER…EARK). Ser-947 bears the Phosphoserine mark. The segment covering 969–978 (VRQNSATESA) has biased composition (polar residues). A PDZ-binding motif is present at residues 990 to 992 (TRL).

This sequence belongs to the SAPAP family. As to quaternary structure, interacts with the guanylate kinase-like domain of DLG1, DLG2, DLG3, DLG4 and AIP1. Interacts with the PDZ domain of SHANK1, SHANK2 and SHANK3. Found in a complex with DLG4 and SHANK1, SHANK2 or SHANK3. Found in a complex with DLG4 and BEGAIN. Interacts with DYL2 and LRFN1. Interacts with MPP2 (via the SH3-Guanylate kinase-like sub-module). Post-translationally, ubiquitinated by TRIM3; leading to proteasomal degradation. Highest levels in the neocortex, part of the hippocampus, the granule cell layer of the cerebellum, the glomerular layer of the olfactory bulb, the inner plexiform layer of the retina, the ventral and dorsal horn of the spinal cord, the neuromuscular junction and the submandibular ganglion.

It localises to the cell membrane. The protein resides in the postsynaptic density. It is found in the synapse. In terms of biological role, part of the postsynaptic scaffold in neuronal cells. The protein is Disks large-associated protein 1 (Dlgap1) of Mus musculus (Mouse).